Consider the following 423-residue polypeptide: Maintenance of mitochondrial morphology protein 1 (423 aa).

Residues 1–15 (MWLDDVASELSFTQG) lie on the Lumenal side of the membrane. Residues 16 to 36 (LLLGQLSIVILIGAFIKFFIF) form a helical membrane-spanning segment. The Cytoplasmic portion of the chain corresponds to 37–423 (GDPPSPDVSA…PGSMPGLSMA (387 aa)). The 213-residue stretch at 110–322 (QPESLDWFNV…EPRFQQIELP (213 aa)) folds into the SMP-LTD domain. Disordered regions lie at residues 327–370 (RKKN…EAET) and 394–423 (SEEG…LSMA). Basic and acidic residues predominate over residues 350–367 (RSRDVERDLREEARKEVE).

It belongs to the MMM1 family. Homodimer. Component of the ER-mitochondria encounter structure (ERMES) or MDM complex, composed of mmm1, mdm10, mdm12 and mdm34. A mmm1 homodimer associates with one molecule of mdm12 on each side in a pairwise head-to-tail manner, and the SMP-LTD domains of mmm1 and mdm12 generate a continuous hydrophobic tunnel for phospholipid trafficking.

Its subcellular location is the endoplasmic reticulum membrane. Functionally, component of the ERMES/MDM complex, which serves as a molecular tether to connect the endoplasmic reticulum (ER) and mitochondria. Components of this complex are involved in the control of mitochondrial shape and protein biogenesis, and function in nonvesicular lipid trafficking between the ER and mitochondria. The mdm12-mmm1 subcomplex functions in the major beta-barrel assembly pathway that is responsible for biogenesis of all outer membrane beta-barrel proteins, and acts in a late step after the SAM complex. The mdm10-mdm12-mmm1 subcomplex further acts in the TOM40-specific pathway after the action of the mdm12-mmm1 complex. Essential for establishing and maintaining the structure of mitochondria and maintenance of mtDNA nucleoids. This Sclerotinia sclerotiorum (strain ATCC 18683 / 1980 / Ss-1) (White mold) protein is Maintenance of mitochondrial morphology protein 1.